We begin with the raw amino-acid sequence, 534 residues long: Peptide chain release factor 3 (534 aa).

The 270-residue stretch at 9–278 folds into the tr-type G domain; that stretch reads SRRRTFAIIS…FFVEHAPSPQ (270 aa). GTP-binding positions include 18–25, 86–90, and 140–143; these read SHPDAGKT, DTPGH, and NKLD.

This sequence belongs to the TRAFAC class translation factor GTPase superfamily. Classic translation factor GTPase family. PrfC subfamily.

It is found in the cytoplasm. In terms of biological role, increases the formation of ribosomal termination complexes and stimulates activities of RF-1 and RF-2. It binds guanine nucleotides and has strong preference for UGA stop codons. It may interact directly with the ribosome. The stimulation of RF-1 and RF-2 is significantly reduced by GTP and GDP, but not by GMP. The polypeptide is Peptide chain release factor 3 (Stenotrophomonas maltophilia (strain K279a)).